The primary structure comprises 422 residues: Lactoyl-CoA dehydratase subunit alpha (422 aa).

It belongs to the FldB/FldC dehydratase alpha/beta subunit family. As to quaternary structure, heterodimer of an alpha (LcdA) and a beta (LcdB) subunit. [4Fe-4S] cluster is required as a cofactor. It depends on FMN as a cofactor. Riboflavin serves as cofactor. The cofactor is Mg(2+).

The catalysed reaction is (R)-lactoyl-CoA = acryloyl-CoA + H2O. It carries out the reaction (2R)-hydroxybutanoyl-CoA = (2E)-butenoyl-CoA + H2O. With respect to regulation, activated by the LcdC protein. In terms of biological role, involved in the acrylate pathway for the conversion of D-lactic acid to propionic acid. Catalyzes the reversible dehydration of Lactoyl-CoA and 2-hydroxybutyroyl-CoA to acryloyl-CoA and crotonyl-CoA, respectively. In Anaerotignum propionicum (Clostridium propionicum), this protein is Lactoyl-CoA dehydratase subunit alpha (lcdA).